The following is a 100-amino-acid chain: Urease subunit gamma (100 aa).

The protein belongs to the urease gamma subunit family. As to quaternary structure, heterotrimer of UreA (gamma), UreB (beta) and UreC (alpha) subunits. Three heterotrimers associate to form the active enzyme.

It is found in the cytoplasm. It catalyses the reaction urea + 2 H2O + H(+) = hydrogencarbonate + 2 NH4(+). It participates in nitrogen metabolism; urea degradation; CO(2) and NH(3) from urea (urease route): step 1/1. The protein is Urease subunit gamma of Prochlorococcus marinus (strain MIT 9303).